Consider the following 60-residue polypeptide: Large ribosomal subunit protein bL32 (60 aa).

The interval 1-60 is disordered; the sequence is MAVQQVKKSRSKRDIRRSHDSLTNPTLSTDKSTGELHLRHHVSPNGFYKGRKVVDTKSED. Positions 7 to 16 are enriched in basic residues; that stretch reads KKSRSKRDIR. Residues 22-31 show a composition bias toward polar residues; that stretch reads LTNPTLSTDK.

This sequence belongs to the bacterial ribosomal protein bL32 family.

This chain is Large ribosomal subunit protein bL32, found in Francisella tularensis subsp. tularensis (strain SCHU S4 / Schu 4).